Here is a 307-residue protein sequence, read N- to C-terminus: Regulating synaptic membrane exocytosis protein 3 (307 aa).

The tract at residues 86–120 is disordered; sequence STETGIAVEMRSRVTRQGSRESTDGSTNSNSSEGT. The span at 109–119 shows a compositional bias: polar residues; that stretch reads DGSTNSNSSEG. Residues 155 to 273 form the C2 domain; that stretch reads PMGDVHIAIM…DLSAVVTGWY (119 aa). A phosphoserine mark is found at S294 and S297.

Binds PPFIA3. Does not bind RAB3. In terms of tissue distribution, expressed exclusively in brain with significant levels in cortex, cerebellum and olfactory bulb. Detected at lower level in hippocampus.

Its subcellular location is the synapse. Regulates synaptic membrane exocytosis. In Rattus norvegicus (Rat), this protein is Regulating synaptic membrane exocytosis protein 3 (Rims3).